A 503-amino-acid chain; its full sequence is UPF0522 protein C (503 aa).

The first 18 residues, 1–18, serve as a signal peptide directing secretion; sequence MKLFILIILSICLALVNS. Residues asparagine 330, asparagine 337, and asparagine 370 are each glycosylated (N-linked (GlcNAc...) asparagine).

The protein belongs to the UPF0522 family.

Its subcellular location is the secreted. This is UPF0522 protein C from Dictyostelium discoideum (Social amoeba).